Consider the following 1249-residue polypeptide: Minor capsid protein M1249L (1249 aa).

The protein belongs to the asfivirus M1249L family. In terms of assembly, interacts with the minor capsid protein p17 and with the hexon capsid protein p72 capsomers; these interactions form a rigid zipper structure that stabilizes the capsomers. Interacts with host IRF3.

Its subcellular location is the virion. The protein localises to the host cytoplasm. Its function is as follows. Together with the penton and the other minor capsid proteins (p17, p49), forms a complicated network immediately below the outer capsid shell, stabilizing the whole capsid. In addition, blocks IFN-beta transactivation mediated by the cGAS-STING pathway and regulates the transcriptional activity of IFN-beta. Mechanistically, suppresses the phosphorylation of host key adapter protein TBK1 and degrades host IRF3 in the cytoplasm. The polypeptide is Minor capsid protein M1249L (African swine fever virus (isolate Tick/Malawi/Lil 20-1/1983) (ASFV)).